The chain runs to 512 residues: Serine palmitoyltransferase 3 (512 aa).

Residue K345 is modified to N6-(pyridoxal phosphate)lysine.

Belongs to the class-II pyridoxal-phosphate-dependent aminotransferase family. As to quaternary structure, heterodimer of sptl-1/sptl-3. The cofactor is pyridoxal 5'-phosphate.

It catalyses the reaction L-serine + hexadecanoyl-CoA + H(+) = 3-oxosphinganine + CO2 + CoA. Its pathway is lipid metabolism; sphingolipid metabolism. Its function is as follows. Component of the serine palmitoyltransferase (SPT) that catalyzes the first committed step in sphingolipid biosynthesis, which is the condensation of an acyl-CoA species and L-serine. The catalytic core is composed of a heterodimer of sptl-1 and sptl-2 or sptl-1 and sptl-3. Required for the specification of abicobasal polarity and development of the gut lumen. The chain is Serine palmitoyltransferase 3 (sptl-3) from Caenorhabditis elegans.